The following is a 427-amino-acid chain: Enolase (427 aa).

(2R)-2-phosphoglycerate is bound at residue glutamine 164. Glutamate 206 functions as the Proton donor in the catalytic mechanism. Mg(2+) contacts are provided by aspartate 243, glutamate 284, and aspartate 311. Lysine 336, arginine 365, serine 366, and lysine 387 together coordinate (2R)-2-phosphoglycerate. Lysine 336 functions as the Proton acceptor in the catalytic mechanism.

Belongs to the enolase family. Mg(2+) serves as cofactor.

It localises to the cytoplasm. The protein localises to the secreted. Its subcellular location is the cell surface. The enzyme catalyses (2R)-2-phosphoglycerate = phosphoenolpyruvate + H2O. The protein operates within carbohydrate degradation; glycolysis; pyruvate from D-glyceraldehyde 3-phosphate: step 4/5. Catalyzes the reversible conversion of 2-phosphoglycerate (2-PG) into phosphoenolpyruvate (PEP). It is essential for the degradation of carbohydrates via glycolysis. The protein is Enolase of Synechococcus sp. (strain JA-2-3B'a(2-13)) (Cyanobacteria bacterium Yellowstone B-Prime).